The sequence spans 403 residues: Phosphoglycerate kinase (403 aa).

Residues 21–23, R36, 59–62, R119, and R159 each bind substrate; these read DFN and HLGR. ATP is bound by residues K214, G301, E332, and 359–362; that span reads GGDS.

Belongs to the phosphoglycerate kinase family. As to quaternary structure, monomer.

Its subcellular location is the cytoplasm. The catalysed reaction is (2R)-3-phosphoglycerate + ATP = (2R)-3-phospho-glyceroyl phosphate + ADP. The protein operates within carbohydrate degradation; glycolysis; pyruvate from D-glyceraldehyde 3-phosphate: step 2/5. This Lactobacillus acidophilus (strain ATCC 700396 / NCK56 / N2 / NCFM) protein is Phosphoglycerate kinase.